A 364-amino-acid chain; its full sequence is Chorismate synthase (364 aa).

Arg48 is an NADP(+) binding site. FMN contacts are provided by residues 131-133, 243-244, Gly288, 303-307, and Arg329; these read RSS, NA, and KPTSS.

This sequence belongs to the chorismate synthase family. Homotetramer. The cofactor is FMNH2.

It catalyses the reaction 5-O-(1-carboxyvinyl)-3-phosphoshikimate = chorismate + phosphate. It functions in the pathway metabolic intermediate biosynthesis; chorismate biosynthesis; chorismate from D-erythrose 4-phosphate and phosphoenolpyruvate: step 7/7. Functionally, catalyzes the anti-1,4-elimination of the C-3 phosphate and the C-6 proR hydrogen from 5-enolpyruvylshikimate-3-phosphate (EPSP) to yield chorismate, which is the branch point compound that serves as the starting substrate for the three terminal pathways of aromatic amino acid biosynthesis. This reaction introduces a second double bond into the aromatic ring system. This is Chorismate synthase from Brucella melitensis biotype 2 (strain ATCC 23457).